The sequence spans 410 residues: Angiopoietin-related protein 4 (410 aa).

The first 23 residues, 1-23 (MRCAPTAGAALVLCAATAGLLSA), serve as a signal peptide directing secretion. The tract at residues 79–101 (ACQGPKGKDAPFKDSEDRVPEGQ) is disordered. The segment covering 84–98 (KGKDAPFKDSEDRVP) has biased composition (basic and acidic residues). The stretch at 104–152 (ETLQSLQTQLKAQNSKIQQLFQKVAQQQRYLSKQNLRIQNLQSQIDLLA) forms a coiled coil. N-linked (GlcNAc...) asparagine glycosylation occurs at asparagine 181. Residues 183-405 (THLHRPPRDC…ATTLLIQPME (223 aa)) enclose the Fibrinogen C-terminal domain. The cysteines at positions 192 and 220 are disulfide-linked. Asparagine 236 and asparagine 242 each carry an N-linked (GlcNAc...) asparagine glycan. Residues cysteine 345 and cysteine 358 are joined by a disulfide bond.

In terms of assembly, homooligomer; disulfide-linked via Cys residues in the N-terminal part of the protein. The homooligomer undergoes proteolytic processing to release the ANGPTL4 C-terminal chain, which circulates as a monomer. The homooligomer unprocessed form is able to interact with the extracellular matrix. In terms of processing, N-glycosylated. Forms disulfide-linked dimers and tetramers. Post-translationally, cleaved into a smaller N-terminal chain and a larger chain that contains the fibrinogen C-terminal domain; both cleaved and uncleaved forms are detected in the extracellular space. The cleaved form is not present within the cell. Detected in liver and kidney. Predominantly expressed in adipose tissue and is strongly up-regulated by fasting in white adipose tissue and liver. More abundant in areas of lower flow stress in the inner curvature compared to the outer curvature regions of the aorta (at protein level).

The protein localises to the secreted. Its subcellular location is the extracellular space. It localises to the extracellular matrix. In terms of biological role, mediates inactivation of the lipoprotein lipase LPL, and thereby plays a role in the regulation of triglyceride clearance from the blood serum and in lipid metabolism. May also play a role in regulating glucose homeostasis and insulin sensitivity. Inhibits proliferation, migration, and tubule formation of endothelial cells and reduces vascular leakage. Upon heterologous expression, inhibits the adhesion of endothelial cell to the extracellular matrix (ECM), and inhibits the reorganization of the actin cytoskeleton, formation of actin stress fibers and focal adhesions in endothelial cells that have adhered to ANGPTL4-containing ECM (in vitro). Depending on context, may modulate tumor-related angiogenesis. Its function is as follows. Mediates inactivation of the lipoprotein lipase LPL, and thereby plays an important role in the regulation of triglyceride clearance from the blood serum and in lipid metabolism. Has higher activity in LPL inactivation than the uncleaved protein. This is Angiopoietin-related protein 4 (Angptl4) from Mus musculus (Mouse).